A 333-amino-acid polypeptide reads, in one-letter code: Holliday junction branch migration complex subunit RuvB (333 aa).

The tract at residues 4–185 (IDRLVSTDVL…FGIVQRLEFY (182 aa)) is large ATPase domain (RuvB-L). ATP is bound by residues Ile-24, Arg-25, Gly-66, Lys-69, Thr-70, Thr-71, 132-134 (EDY), Arg-175, Tyr-185, and Arg-222. Mg(2+) is bound at residue Thr-70. The interval 186–256 (SVPDLEHIVS…IAIKALEMLN (71 aa)) is small ATPAse domain (RuvB-S). Positions 259–333 (KEGLDYMDSK…HAYQHFICGG (75 aa)) are head domain (RuvB-H). Residues Arg-295, Arg-314, and Arg-319 each contribute to the DNA site.

This sequence belongs to the RuvB family. As to quaternary structure, homohexamer. Forms an RuvA(8)-RuvB(12)-Holliday junction (HJ) complex. HJ DNA is sandwiched between 2 RuvA tetramers; dsDNA enters through RuvA and exits via RuvB. An RuvB hexamer assembles on each DNA strand where it exits the tetramer. Each RuvB hexamer is contacted by two RuvA subunits (via domain III) on 2 adjacent RuvB subunits; this complex drives branch migration. In the full resolvosome a probable DNA-RuvA(4)-RuvB(12)-RuvC(2) complex forms which resolves the HJ.

Its subcellular location is the cytoplasm. It carries out the reaction ATP + H2O = ADP + phosphate + H(+). Its function is as follows. The RuvA-RuvB-RuvC complex processes Holliday junction (HJ) DNA during genetic recombination and DNA repair, while the RuvA-RuvB complex plays an important role in the rescue of blocked DNA replication forks via replication fork reversal (RFR). RuvA specifically binds to HJ cruciform DNA, conferring on it an open structure. The RuvB hexamer acts as an ATP-dependent pump, pulling dsDNA into and through the RuvAB complex. RuvB forms 2 homohexamers on either side of HJ DNA bound by 1 or 2 RuvA tetramers; 4 subunits per hexamer contact DNA at a time. Coordinated motions by a converter formed by DNA-disengaged RuvB subunits stimulates ATP hydrolysis and nucleotide exchange. Immobilization of the converter enables RuvB to convert the ATP-contained energy into a lever motion, pulling 2 nucleotides of DNA out of the RuvA tetramer per ATP hydrolyzed, thus driving DNA branch migration. The RuvB motors rotate together with the DNA substrate, which together with the progressing nucleotide cycle form the mechanistic basis for DNA recombination by continuous HJ branch migration. Branch migration allows RuvC to scan DNA until it finds its consensus sequence, where it cleaves and resolves cruciform DNA. This Hamiltonella defensa subsp. Acyrthosiphon pisum (strain 5AT) protein is Holliday junction branch migration complex subunit RuvB.